A 689-amino-acid chain; its full sequence is tRNA 5-methylaminomethyl-2-thiouridine biosynthesis bifunctional protein MnmC (689 aa).

A tRNA (mnm(5)s(2)U34)-methyltransferase region spans residues 1–245 (MNQRPIQTAT…KREMLTGTLP (245 aa)). The segment at 270–689 (IGGGIVSALT…RSPATQESSR (420 aa)) is FAD-dependent cmnm(5)s(2)U34 oxidoreductase.

In the N-terminal section; belongs to the methyltransferase superfamily. tRNA (mnm(5)s(2)U34)-methyltransferase family. The protein in the C-terminal section; belongs to the DAO family. The cofactor is FAD.

It localises to the cytoplasm. It catalyses the reaction 5-aminomethyl-2-thiouridine(34) in tRNA + S-adenosyl-L-methionine = 5-methylaminomethyl-2-thiouridine(34) in tRNA + S-adenosyl-L-homocysteine + H(+). Catalyzes the last two steps in the biosynthesis of 5-methylaminomethyl-2-thiouridine (mnm(5)s(2)U) at the wobble position (U34) in tRNA. Catalyzes the FAD-dependent demodification of cmnm(5)s(2)U34 to nm(5)s(2)U34, followed by the transfer of a methyl group from S-adenosyl-L-methionine to nm(5)s(2)U34, to form mnm(5)s(2)U34. The protein is tRNA 5-methylaminomethyl-2-thiouridine biosynthesis bifunctional protein MnmC of Yersinia pseudotuberculosis serotype I (strain IP32953).